A 275-amino-acid polypeptide reads, in one-letter code: Translation initiation factor 2 subunit alpha (275 aa).

Residues 12–83 (GEFVVATVKR…RKGHIDLSLR (72 aa)) form the S1 motif domain.

Belongs to the eIF-2-alpha family. As to quaternary structure, heterotrimer composed of an alpha, a beta and a gamma chain.

In terms of biological role, eIF-2 functions in the early steps of protein synthesis by forming a ternary complex with GTP and initiator tRNA. The polypeptide is Translation initiation factor 2 subunit alpha (eif2a) (Pyrococcus horikoshii (strain ATCC 700860 / DSM 12428 / JCM 9974 / NBRC 100139 / OT-3)).